The sequence spans 95 residues: Co-chaperonin GroES (95 aa).

The protein belongs to the GroES chaperonin family. As to quaternary structure, heptamer of 7 subunits arranged in a ring. Interacts with the chaperonin GroEL.

The protein resides in the cytoplasm. In terms of biological role, together with the chaperonin GroEL, plays an essential role in assisting protein folding. The GroEL-GroES system forms a nano-cage that allows encapsulation of the non-native substrate proteins and provides a physical environment optimized to promote and accelerate protein folding. GroES binds to the apical surface of the GroEL ring, thereby capping the opening of the GroEL channel. The chain is Co-chaperonin GroES from Geobacter sulfurreducens (strain ATCC 51573 / DSM 12127 / PCA).